Reading from the N-terminus, the 120-residue chain is MFLLYEYDIFWAFLIISSLIPILAFFISGILAPIRKGPEKLSSYESGIEPMGDAWFQFRIRYYMFALVFVVFDVETVFLYPWAMSFDVLGLSVFLEAFVFVLILIVGLVYAWRKGALEWS.

3 helical membrane-spanning segments follow: residues 9-29 (IFWA…FISG), 64-84 (MFAL…PWAM), and 88-108 (VLGL…IVGL).

This sequence belongs to the complex I subunit 3 family. In terms of assembly, NDH is composed of at least 16 different subunits, 5 of which are encoded in the nucleus.

The protein resides in the plastid. Its subcellular location is the chloroplast thylakoid membrane. It catalyses the reaction a plastoquinone + NADH + (n+1) H(+)(in) = a plastoquinol + NAD(+) + n H(+)(out). The enzyme catalyses a plastoquinone + NADPH + (n+1) H(+)(in) = a plastoquinol + NADP(+) + n H(+)(out). In terms of biological role, NDH shuttles electrons from NAD(P)H:plastoquinone, via FMN and iron-sulfur (Fe-S) centers, to quinones in the photosynthetic chain and possibly in a chloroplast respiratory chain. The immediate electron acceptor for the enzyme in this species is believed to be plastoquinone. Couples the redox reaction to proton translocation, and thus conserves the redox energy in a proton gradient. The chain is NAD(P)H-quinone oxidoreductase subunit 3, chloroplastic from Jasminum nudiflorum (Winter jasmine).